A 1259-amino-acid polypeptide reads, in one-letter code: Zinc finger protein BRUTUS-like At1g74770 (1259 aa).

A helical membrane pass occupies residues leucine 441–phenylalanine 461. Basic and acidic residues-rich tracts occupy residues lysine 904 to lysine 916 and glutamate 924 to serine 934. Positions lysine 904–serine 938 are disordered. A CHY-type zinc finger spans residues proline 1018–serine 1087. Residues cysteine 1025, histidine 1027, cysteine 1038, cysteine 1039, cysteine 1045, cysteine 1048, histidine 1049, histidine 1055, cysteine 1067, cysteine 1070, cysteine 1080, cysteine 1085, cysteine 1094, cysteine 1097, histidine 1108, cysteine 1109, cysteine 1112, cysteine 1115, histidine 1127, cysteine 1128, cysteine 1131, cysteine 1134, histidine 1142, and cysteine 1144 each coordinate Zn(2+). A CTCHY-type zinc finger spans residues methionine 1089–asparagine 1152. The RING-type; atypical zinc finger occupies cysteine 1153–serine 1195.

Binds zinc and iron ions.

Its subcellular location is the membrane. It is found in the nucleus. Its pathway is protein modification; protein ubiquitination. In terms of biological role, probable E3 ubiquitin-protein ligase that may regulate the response to iron deficiency and thus contributes to iron homeostasis. This Arabidopsis thaliana (Mouse-ear cress) protein is Zinc finger protein BRUTUS-like At1g74770.